A 131-amino-acid polypeptide reads, in one-letter code: Protein DfrA (131 aa).

The protein belongs to the RutC family.

The polypeptide is Protein DfrA (dfrA) (Myxococcus xanthus).